The following is a 338-amino-acid chain: tRNA(Ile)-lysidine synthase (338 aa).

23 to 28 (SGGLDS) contacts ATP.

Belongs to the tRNA(Ile)-lysidine synthase family.

The protein resides in the cytoplasm. It carries out the reaction cytidine(34) in tRNA(Ile2) + L-lysine + ATP = lysidine(34) in tRNA(Ile2) + AMP + diphosphate + H(+). In terms of biological role, ligates lysine onto the cytidine present at position 34 of the AUA codon-specific tRNA(Ile) that contains the anticodon CAU, in an ATP-dependent manner. Cytidine is converted to lysidine, thus changing the amino acid specificity of the tRNA from methionine to isoleucine. In Helicobacter pylori (strain J99 / ATCC 700824) (Campylobacter pylori J99), this protein is tRNA(Ile)-lysidine synthase.